Reading from the N-terminus, the 366-residue chain is Homoserine O-acetyltransferase (366 aa).

The region spanning 47–349 (NAILICHALS…SGEGHDSFLL (303 aa)) is the AB hydrolase-1 domain. Residue Ser-153 is the Nucleophile of the active site. Residue Arg-221 participates in substrate binding. Active-site residues include Asp-311 and His-344. Substrate is bound at residue Asp-345.

This sequence belongs to the AB hydrolase superfamily. MetX family. As to quaternary structure, homodimer.

The protein resides in the cytoplasm. The catalysed reaction is L-homoserine + acetyl-CoA = O-acetyl-L-homoserine + CoA. It participates in amino-acid biosynthesis; L-methionine biosynthesis via de novo pathway; O-acetyl-L-homoserine from L-homoserine: step 1/1. Its function is as follows. Transfers an acetyl group from acetyl-CoA to L-homoserine, forming acetyl-L-homoserine. In Leptospira interrogans serogroup Icterohaemorrhagiae serovar copenhageni (strain Fiocruz L1-130), this protein is Homoserine O-acetyltransferase.